A 184-amino-acid chain; its full sequence is V-type proton ATPase subunit E (184 aa).

Belongs to the V-ATPase E subunit family.

Functionally, produces ATP from ADP in the presence of a proton gradient across the membrane. The polypeptide is V-type proton ATPase subunit E (Finegoldia magna (strain ATCC 29328 / DSM 20472 / WAL 2508) (Peptostreptococcus magnus)).